Reading from the N-terminus, the 434-residue chain is RNA polymerase II holoenzyme cyclin-like subunit (434 aa).

Residues 23-155 enclose the Cyclin N-terminal domain; that stretch reads EARRRVLLLE…LIEEMDSYLL (133 aa). Low complexity predominate over residues 248 to 278; it reads GSSTNPININNNNNTNTSNNNGTTSTTTTTT. 3 disordered regions span residues 248-292, 301-320, and 330-362; these read GSST…DNTE, LTKSSNNSQDKSDDKMDIDN, and QIQNQTQHQHQESTHNNTSSTNTGRNGINGQIS. Over residues 330 to 359 the composition is skewed to low complexity; that stretch reads QIQNQTQHQHQESTHNNTSSTNTGRNGING.

Belongs to the cyclin family. Cyclin C subfamily. As to quaternary structure, component of the SRB8-11 complex, a regulatory module of the Mediator complex.

It localises to the nucleus. In terms of biological role, component of the SRB8-11 complex. The SRB8-11 complex is a regulatory module of the Mediator complex which is itself involved in regulation of basal and activated RNA polymerase II-dependent transcription. The SRB8-11 complex may be involved in the transcriptional repression of a subset of genes regulated by Mediator. It may inhibit the association of the Mediator complex with RNA polymerase II to form the holoenzyme complex. The SRB8-11 complex phosphorylates the C-terminal domain (CTD) of the largest subunit of RNA polymerase II. This chain is RNA polymerase II holoenzyme cyclin-like subunit (SSN8), found in Candida albicans (strain SC5314 / ATCC MYA-2876) (Yeast).